The following is a 727-amino-acid chain: MRRSSPEKKPEAEWEADAAAAAAATAAATESLPAETEKQQGVDAGAAGDPERLELEEQPKDVGRIPTPTRRHAPEEGEARVVRRLPPALPLAQPRPAARALSQLVKARGRSRSRVYRRSAGSMRPVTVDSSKARTSLDALKISLRQLRWKEFPFGRRLPCDIYWHGVSFRDSDILSGQVNKFPGMTEMVRKVTLSRALRIMQNLFPEEYNFYPRSWILPEEFQLFVSQVQTVKEGDPSWKPTFIVKPDSGCQGDGIYLIKDPCDGRLTGTLHNRPAVVQEYIRKPLLIDKLKFDIRLYVLLKSLDPLEIYIAKDGLSRFCTEPYQEPNPQNLHHVFMHLTNYSLNIHSGKFVHSDSASTGSKRTFSSILCRLSSKGVDIKKVWSDIISLVIKTVIALTPELKVFYQSDIPTGRPGPTCFQILGFDILLMKNLKPMLLEVNANPSMRIEHEYELSPGVFENIPSLVDEEVKVAVIRDTLRLMDPLKKKKEIHFPDIYMDRKHRIPPVSDRMSSWKHKGSSLSIVRSQQMEKSFTSKEDLNCDPTGGDSEPNPEAHLPSICLKQVFPKYAKQFNYLRLVDRMANLFIRFLGIKGTMKLGPTGFRTFIRNCKLSSSSLSMAAVDILYIDITRRWNSVTVDQRDSGMCLQAFVEAFFFLAQRKFKLQPLHEQVASLIDLCEYHLSVLDEKRLLCHRGRPLQRNPPQMNRPEHSATGSSAPRVIGASKLSQS.

The span at 1–12 shows a compositional bias: basic and acidic residues; sequence MRRSSPEKKPEA. The tract at residues 1-88 is disordered; the sequence is MRRSSPEKKP…ARVVRRLPPA (88 aa). Over residues 17-34 the composition is skewed to low complexity; it reads DAAAAAAATAAATESLPA. Basic and acidic residues-rich tracts occupy residues 49 to 63 and 72 to 81; these read DPERLELEEQPKDVG and HAPEEGEARV. The 353-residue stretch at 125 to 477 folds into the TTL domain; sequence PVTVDSSKAR…EVKVAVIRDT (353 aa). ATP is bound by residues Lys246, 252-253, 279-282, and 292-294; these read QG, QEYI, and KFD. Gln252 contributes to the a protein binding site. Residue Arg318 coordinates L-glutamate. 340–341 provides a ligand contact to ATP; it reads TN. Residues Tyr342, Ser343, and Lys362 each coordinate L-glutamate. Mg(2+) is bound by residues Asp425, Glu438, and Asn440. The interval 464–566 is c-MTBD region; sequence LVDEEVKVAV…SICLKQVFPK (103 aa). L-glutamate is bound at residue Lys470. Disordered regions lie at residues 530–551 and 694–727; these read KSFTSKEDLNCDPTGGDSEPNP and RPLQRNPPQMNRPEHSATGSSAPRVIGASKLSQS.

The protein belongs to the tubulin--tyrosine ligase family. The cofactor is Mg(2+). As to expression, highly expressed in brain, kidney, liver, lung, muscle and testis. Expressed in heart, spleen and trachea. In the brain, expressed in ependymal cilia, cortex, corpus callosum and striatum.

It localises to the cytoplasm. The protein resides in the cytoskeleton. It is found in the cilium basal body. It catalyses the reaction L-glutamyl-[protein] + L-glutamate + ATP = gamma-L-glutamyl-L-glutamyl-[protein] + ADP + phosphate + H(+). The catalysed reaction is (L-glutamyl)(n)-gamma-L-glutamyl-L-glutamyl-[protein] + L-glutamate + ATP = (L-glutamyl)(n+1)-gamma-L-glutamyl-L-glutamyl-[protein] + ADP + phosphate + H(+). Polyglutamylase which modifies tubulin, generating polyglutamate side chains of variable lengths on the gamma-carboxyl group of specific glutamate residues within the C-terminal tail of tubulin. Preferentially mediates ATP-dependent polyglutamate long side-chain elongation over the initiation step of the polyglutamylation reaction. Preferentially modifies the alpha-tubulin tail over a beta-tail. Required for CCSAP localization to both spindle and cilia microtubules. Promotes tubulin polyglutamylation which stimulates spastin/SPAST-mediated microtubule severing, thereby regulating microtubule functions. The sequence is that of Tubulin polyglutamylase TTLL11 from Mus musculus (Mouse).